The primary structure comprises 215 residues: Protein GET1 (215 aa).

At Met1–Leu4 the chain is on the lumenal side. Residues Leu5–Ala24 form a helical membrane-spanning segment. Topologically, residues Thr25 to Arg110 are cytoplasmic. Residues Ala72–Lys104 are a coiled coil. The helical transmembrane segment at Trp111–Phe131 threads the bilayer. Residues Trp132–Ser155 lie on the Lumenal side of the membrane. A helical membrane pass occupies residues Val156–Ile172. Residues Lys173 to Leu215 are Cytoplasmic-facing.

The protein belongs to the WRB/GET1 family. As to quaternary structure, interacts with GET3.

It localises to the endoplasmic reticulum membrane. Functionally, required for the post-translational delivery of tail-anchored (TA) proteins to the endoplasmic reticulum. Acts as a membrane receptor for soluble GET3, which recognizes and selectively binds the transmembrane domain of TA proteins in the cytosol. The protein is Protein GET1 of Pyricularia oryzae (strain 70-15 / ATCC MYA-4617 / FGSC 8958) (Rice blast fungus).